The primary structure comprises 85 residues: uncharacterized protein (85 aa).

It belongs to the ycf76 family.

It is found in the plastid. The protein resides in the chloroplast. This is an uncharacterized protein from Saccharum hybrid (Sugarcane).